Consider the following 108-residue polypeptide: Putative pterin-4-alpha-carbinolamine dehydratase (108 aa).

Belongs to the pterin-4-alpha-carbinolamine dehydratase family.

The catalysed reaction is (4aS,6R)-4a-hydroxy-L-erythro-5,6,7,8-tetrahydrobiopterin = (6R)-L-erythro-6,7-dihydrobiopterin + H2O. This Bordetella avium (strain 197N) protein is Putative pterin-4-alpha-carbinolamine dehydratase.